A 283-amino-acid chain; its full sequence is Cytosolic Fe-S cluster assembly factor CFD1 (283 aa).

ATP is bound at residue 26–33; it reads GKGGVGKS. 2 residues coordinate [4Fe-4S] cluster: C202 and C205.

This sequence belongs to the Mrp/NBP35 ATP-binding proteins family. NUBP2/CFD1 subfamily. Heterotetramer of 2 NBP35 and 2 CFD1 chains. [4Fe-4S] cluster is required as a cofactor.

It is found in the cytoplasm. In terms of biological role, component of the cytosolic iron-sulfur (Fe/S) protein assembly (CIA) machinery. Required for maturation of extramitochondrial Fe-S proteins. The NBP35-CFD1 heterotetramer forms a Fe-S scaffold complex, mediating the de novo assembly of an Fe-S cluster and its transfer to target apoproteins. Required for biogenesis and export of both ribosomal subunits, which may reflect a role in assembly of the Fe/S clusters in RLI1, a protein which performs rRNA processing and ribosome export. This is Cytosolic Fe-S cluster assembly factor CFD1 from Kluyveromyces lactis (strain ATCC 8585 / CBS 2359 / DSM 70799 / NBRC 1267 / NRRL Y-1140 / WM37) (Yeast).